The sequence spans 436 residues: Xylose isomerase (436 aa).

Residues H100 and D103 contribute to the active site. Positions 231, 267, 270, 295, 306, 308, and 338 each coordinate Mg(2+).

It belongs to the xylose isomerase family. Homotetramer. Mg(2+) serves as cofactor.

The protein resides in the cytoplasm. It catalyses the reaction alpha-D-xylose = alpha-D-xylulofuranose. The chain is Xylose isomerase from Ruegeria sp. (strain TM1040) (Silicibacter sp.).